Here is a 143-residue protein sequence, read N- to C-terminus: Hemoglobin subunit alpha-1 (143 aa).

S2 is subject to N-acetylserine. In terms of domain architecture, Globin spans 2 to 143; the sequence is SLSTKDKETV…VSLALAEKYR (142 aa). O2 is bound at residue H60. H89 contacts heme b.

It belongs to the globin family. Hb1 is a heterotetramer of two alpha-1 chains and two beta-1 chains. As to expression, red blood cells.

Its function is as follows. Involved in oxygen transport from gills to the various peripheral tissues. The sequence is that of Hemoglobin subunit alpha-1 from Liparis tunicatus (Kelp snailfish).